The chain runs to 38 residues: Large ribosomal subunit protein bL36 (38 aa).

Belongs to the bacterial ribosomal protein bL36 family.

This chain is Large ribosomal subunit protein bL36, found in Buchnera aphidicola subsp. Baizongia pistaciae (strain Bp).